The following is a 295-amino-acid chain: Sulfotransferase 1A2 (295 aa).

Residue 48–53 (KSGTTW) coordinates 3'-phosphoadenylyl sulfate. A substrate-binding site is contributed by 106-108 (KTH). His-108 acts as the Proton acceptor in catalysis. 3'-phosphoadenylyl sulfate contacts are provided by residues Arg-130, Ser-138, Tyr-193, 227 to 232 (TSFKEM), and 255 to 259 (FMRKG).

The protein belongs to the sulfotransferase 1 family. In terms of assembly, homodimer.

Its subcellular location is the cytoplasm. It carries out the reaction a phenol + 3'-phosphoadenylyl sulfate = an aryl sulfate + adenosine 3',5'-bisphosphate + H(+). Functionally, sulfotransferase that utilizes 3'-phospho-5'-adenylyl sulfate (PAPS) as sulfonate donor to catalyze the sulfate conjugation of catecholamines, phenolic drugs and neurotransmitters. Is also responsible for the sulfonation and activation of minoxidil. Mediates the metabolic activation of carcinogenic N-hydroxyarylamines to DNA binding products and could so participate as modulating factor of cancer risk. In Homo sapiens (Human), this protein is Sulfotransferase 1A2 (SULT1A2).